A 112-amino-acid polypeptide reads, in one-letter code: uncharacterized protein (112 aa).

This is an uncharacterized protein from Rickettsia conorii (strain ATCC VR-613 / Malish 7).